We begin with the raw amino-acid sequence, 150 residues long: Deoxyuridine 5'-triphosphate nucleotidohydrolase (150 aa).

Substrate is bound by residues 65 to 67 (RSG), asparagine 78, and 82 to 84 (TID). The segment at 130–150 (LSDTERGEGGFGHTGVASKAE) is disordered.

Belongs to the dUTPase family. Mg(2+) serves as cofactor.

The enzyme catalyses dUTP + H2O = dUMP + diphosphate + H(+). It participates in pyrimidine metabolism; dUMP biosynthesis; dUMP from dCTP (dUTP route): step 2/2. Functionally, this enzyme is involved in nucleotide metabolism: it produces dUMP, the immediate precursor of thymidine nucleotides and it decreases the intracellular concentration of dUTP so that uracil cannot be incorporated into DNA. This chain is Deoxyuridine 5'-triphosphate nucleotidohydrolase, found in Chlorobaculum parvum (strain DSM 263 / NCIMB 8327) (Chlorobium vibrioforme subsp. thiosulfatophilum).